A 130-amino-acid polypeptide reads, in one-letter code: S-adenosylmethionine decarboxylase proenzyme (130 aa).

Residue S66 is the Schiff-base intermediate with substrate; via pyruvic acid of the active site. Pyruvic acid (Ser); by autocatalysis is present on S66. H71 acts as the Proton acceptor; for processing activity in catalysis. C86 serves as the catalytic Proton donor; for catalytic activity.

The protein belongs to the prokaryotic AdoMetDC family. Type 1 subfamily. In terms of assembly, heterotetramer of two alpha and two beta chains arranged as a dimer of alpha/beta heterodimers. It depends on pyruvate as a cofactor. In terms of processing, is synthesized initially as an inactive proenzyme. Formation of the active enzyme involves a self-maturation process in which the active site pyruvoyl group is generated from an internal serine residue via an autocatalytic post-translational modification. Two non-identical subunits are generated from the proenzyme in this reaction, and the pyruvate is formed at the N-terminus of the alpha chain, which is derived from the carboxyl end of the proenzyme. The post-translation cleavage follows an unusual pathway, termed non-hydrolytic serinolysis, in which the side chain hydroxyl group of the serine supplies its oxygen atom to form the C-terminus of the beta chain, while the remainder of the serine residue undergoes an oxidative deamination to produce ammonia and the pyruvoyl group blocking the N-terminus of the alpha chain.

The catalysed reaction is S-adenosyl-L-methionine + H(+) = S-adenosyl 3-(methylsulfanyl)propylamine + CO2. It functions in the pathway amine and polyamine biosynthesis; S-adenosylmethioninamine biosynthesis; S-adenosylmethioninamine from S-adenosyl-L-methionine: step 1/1. Functionally, catalyzes the decarboxylation of S-adenosylmethionine to S-adenosylmethioninamine (dcAdoMet), the propylamine donor required for the synthesis of the polyamines spermine and spermidine from the diamine putrescine. This Bacillus cereus (strain ATCC 10987 / NRS 248) protein is S-adenosylmethionine decarboxylase proenzyme.